The sequence spans 303 residues: Peroxisomal trans-2-enoyl-CoA reductase (303 aa).

23 to 47 (VTGGATGIGKAIVKELLELGSNVVI) lines the NADP(+) pocket. Position 32 is an N6-succinyllysine (K32). A Phosphoserine modification is found at S49. The active-site Proton acceptor is the Y179. Y179 bears the Phosphotyrosine mark. Residues 301–303 (AKL) carry the Microbody targeting signal motif.

The protein belongs to the short-chain dehydrogenases/reductases (SDR) family. In terms of assembly, interacts with PEX5, probably required to target it into peroxisomes.

The protein localises to the peroxisome. It carries out the reaction a (2E)-enoyl-CoA + NADPH + H(+) = a 2,3-saturated acyl-CoA + NADP(+). It catalyses the reaction (2E)-hexenoyl-CoA + NADPH + H(+) = hexanoyl-CoA + NADP(+). The enzyme catalyses (2E)-octenoyl-CoA + NADPH + H(+) = octanoyl-CoA + NADP(+). The catalysed reaction is (2E)-decenoyl-CoA + NADPH + H(+) = decanoyl-CoA + NADP(+). It carries out the reaction (2E)-dodecenoyl-CoA + NADPH + H(+) = dodecanoyl-CoA + NADP(+). It catalyses the reaction (2E)-tetradecenoyl-CoA + NADPH + H(+) = tetradecanoyl-CoA + NADP(+). It functions in the pathway lipid metabolism; fatty acid biosynthesis. Its function is as follows. Participates in chain elongation of fatty acids. Catalyzes the reduction of trans-2-enoyl-CoAs of varying chain lengths from 6:1 to 16:1, having maximum activity with 10:1 CoA. Has no 2,4-dienoyl-CoA reductase activity. The polypeptide is Peroxisomal trans-2-enoyl-CoA reductase (PECR) (Pongo abelii (Sumatran orangutan)).